The sequence spans 623 residues: Prothrombin (623 aa).

An N-terminal signal peptide occupies residues 1–24 (MAHVGGLWLHGCLALAVLVSLVHS). A propeptide spanning residues 25–43 (QHVFMAPQQALSLLQRARR) is cleaved from the precursor. The Gla domain occupies 44–90 (ANSGFFEEMRKGNLERECVEEQCSREEAYEALESPSETDAFWAKYTA). 10 positions are modified to 4-carboxyglutamate: Glu50, Glu51, Glu58, Glu60, Glu63, Glu64, Glu69, Glu70, Glu73, and Glu76. The cysteines at positions 61 and 66 are disulfide-linked. 11 cysteine pairs are disulfide-bonded: Cys91-Cys104, Cys109-Cys187, Cys130-Cys170, Cys158-Cys182, Cys214-Cys292, Cys235-Cys275, Cys263-Cys287, Cys337-Cys483, Cys392-Cys408, Cys537-Cys551, and Cys565-Cys595. 2 Kringle domains span residues 108-187 (NCAE…IPVC) and 213-292 (TCVP…LDYC). N-linked (GlcNAc...) asparagine glycans are attached at residues Asn120 and Asn144. A Peptidase S1 domain is found at 365-619 (IVEGSDAEIG…LKKWMQKVID (255 aa)). His407 serves as the catalytic Charge relay system. Asn417 is a glycosylation site (N-linked (GlcNAc...) asparagine). The Charge relay system role is filled by Asp463. The interval 552 to 574 (AGYKPDEGKRGDACEGDSGGPFV) is high affinity receptor-binding region which is also known as the TP508 peptide. The Charge relay system role is filled by Ser569.

Belongs to the peptidase S1 family. In terms of assembly, heterodimer (named alpha-thrombin) of a light and a heavy chain; disulfide-linked. Forms a heterodimer with SERPINA5. In plasma, interacts (via N-terminus) with alpha-1-microglobulin; this interaction does not prevent the activation of prothrombin to thrombin. The gamma-carboxyglutamyl residues, which bind calcium ions, result from the carboxylation of glutamyl residues by a microsomal enzyme, the vitamin K-dependent carboxylase. The modified residues are necessary for the calcium-dependent interaction with a negatively charged phospholipid surface, which is essential for the conversion of prothrombin to thrombin. Post-translationally, in the penultimate step of the coagulation cascade, prothrombin is converted to thrombin by the prothrombinase complex composed of factor Xa (F10), cofactor Va (F5), and phospholipids. This activation requires factor Xa-catalyzed sequential cleavage at 2 sites, Arg-315 and Arg-364, along 2 possible pathways. In the first pathway, the first cleavage occurs at Arg-315, leading to the formation of the inactive intermediate prethrombin-2. This pathway preferentially occurs on platelets and in the absence of cofactor Va. In the second pathway, the first cleavage occurs at Arg-364, which separates protease domain into 2 chains that remain connected through a disulfide bond and generates the active intermediate meizothrombin. The presence of cofactor Va directs activation along the meizothrombin pathway and greatly accelerates the rate of cleavage at Arg-364, but has a smaller effect on the cleavage of meizothrombin at Arg-315. Meizothrombin accumulates as an intermediate when prothrombinase is assembled on the membrane of red blood cells.

The catalysed reaction is Selective cleavage of Arg-|-Gly bonds in fibrinogen to form fibrin and release fibrinopeptides A and B.. Its activity is regulated as follows. Activity is promoted in the presence of negatively charged surfaces, such as polyphosphate and dextran sulfate. Inhibited by SERPINA5. In terms of biological role, thrombin, which cleaves bonds after Arg and Lys, converts fibrinogen to fibrin and activates factors V, VII, VIII, XIII, and, in complex with thrombomodulin, protein C. Functions in blood homeostasis, inflammation and wound healing. Activates coagulation factor XI (F11); activation is promoted by the contact with negatively charged surfaces. Triggers the production of pro-inflammatory cytokines, such as MCP-1/CCL2 and IL8/CXCL8, in endothelial cells. The polypeptide is Prothrombin (F2) (Sus scrofa (Pig)).